The sequence spans 188 residues: Elongation factor P (188 aa).

It belongs to the elongation factor P family.

Its subcellular location is the cytoplasm. The protein operates within protein biosynthesis; polypeptide chain elongation. Functionally, involved in peptide bond synthesis. Stimulates efficient translation and peptide-bond synthesis on native or reconstituted 70S ribosomes in vitro. Probably functions indirectly by altering the affinity of the ribosome for aminoacyl-tRNA, thus increasing their reactivity as acceptors for peptidyl transferase. In Rickettsia akari (strain Hartford), this protein is Elongation factor P.